Here is a 407-residue protein sequence, read N- to C-terminus: 1-deoxy-D-xylulose 5-phosphate reductoisomerase (407 aa).

NADPH contacts are provided by threonine 25, glycine 26, serine 27, isoleucine 28, asparagine 53, and asparagine 136. Lysine 137 contacts 1-deoxy-D-xylulose 5-phosphate. NADPH is bound at residue glutamate 138. Position 162 (aspartate 162) interacts with Mn(2+). Positions 163, 164, 188, and 211 each coordinate 1-deoxy-D-xylulose 5-phosphate. Glutamate 164 is a Mn(2+) binding site. Residue glycine 217 coordinates NADPH. Residues serine 224, asparagine 229, lysine 230, and glutamate 233 each contribute to the 1-deoxy-D-xylulose 5-phosphate site. Glutamate 233 contributes to the Mn(2+) binding site.

The protein belongs to the DXR family. Mg(2+) is required as a cofactor. The cofactor is Mn(2+).

The catalysed reaction is 2-C-methyl-D-erythritol 4-phosphate + NADP(+) = 1-deoxy-D-xylulose 5-phosphate + NADPH + H(+). It participates in isoprenoid biosynthesis; isopentenyl diphosphate biosynthesis via DXP pathway; isopentenyl diphosphate from 1-deoxy-D-xylulose 5-phosphate: step 1/6. Its function is as follows. Catalyzes the NADPH-dependent rearrangement and reduction of 1-deoxy-D-xylulose-5-phosphate (DXP) to 2-C-methyl-D-erythritol 4-phosphate (MEP). The protein is 1-deoxy-D-xylulose 5-phosphate reductoisomerase of Rhodopseudomonas palustris (strain BisB5).